The primary structure comprises 196 residues: ATP-dependent Clp protease proteolytic subunit (196 aa).

Ser-96 functions as the Nucleophile in the catalytic mechanism. The active site involves His-121.

This sequence belongs to the peptidase S14 family. In terms of assembly, fourteen ClpP subunits assemble into 2 heptameric rings which stack back to back to give a disk-like structure with a central cavity, resembling the structure of eukaryotic proteasomes.

Its subcellular location is the cytoplasm. It catalyses the reaction Hydrolysis of proteins to small peptides in the presence of ATP and magnesium. alpha-casein is the usual test substrate. In the absence of ATP, only oligopeptides shorter than five residues are hydrolyzed (such as succinyl-Leu-Tyr-|-NHMec, and Leu-Tyr-Leu-|-Tyr-Trp, in which cleavage of the -Tyr-|-Leu- and -Tyr-|-Trp bonds also occurs).. In terms of biological role, cleaves peptides in various proteins in a process that requires ATP hydrolysis. Has a chymotrypsin-like activity. Plays a major role in the degradation of misfolded proteins. This is ATP-dependent Clp protease proteolytic subunit from Streptococcus gordonii (strain Challis / ATCC 35105 / BCRC 15272 / CH1 / DL1 / V288).